We begin with the raw amino-acid sequence, 457 residues long: Argininosuccinate lyase (457 aa).

This sequence belongs to the lyase 1 family. Argininosuccinate lyase subfamily.

It is found in the cytoplasm. It carries out the reaction 2-(N(omega)-L-arginino)succinate = fumarate + L-arginine. Its pathway is amino-acid biosynthesis; L-arginine biosynthesis; L-arginine from L-ornithine and carbamoyl phosphate: step 3/3. In Escherichia coli O9:H4 (strain HS), this protein is Argininosuccinate lyase.